Here is a 596-residue protein sequence, read N- to C-terminus: Deuterosome assembly protein 1 (596 aa).

3 coiled-coil regions span residues 8–68 (IARN…NHEI), 130–180 (CELQ…FQKE), and 227–284 (IENL…DLLR). A compositionally biased stretch (polar residues) spans 297–306 (TANLANQKTA). Positions 297-316 (TANLANQKTAQGEEASFQVT) are disordered. Residues 337-402 (SEKYQAENDL…LKGAQNRQTS (66 aa)) are a coiled coil. The disordered stretch occupies residues 447 to 467 (DKPQKHRSFHGENNSLKPTNY). Residues 457–467 (GENNSLKPTNY) show a composition bias toward polar residues.

The protein belongs to the CEP63 family.

The protein localises to the cytoplasm. Key structural component of the deuterosome, a structure that promotes de novo centriole amplification in multiciliated cells. Deuterosome-mediated centriole amplification occurs in terminally differentiated multiciliated cells and can generate more than 100 centrioles. Probably sufficient for the specification and formation of the deuterosome inner core. The polypeptide is Deuterosome assembly protein 1 (Xenopus tropicalis (Western clawed frog)).